Reading from the N-terminus, the 244-residue chain is GTP cyclohydrolase 1 type 2 homolog (244 aa).

A divalent metal cation contacts are provided by His65, His66, Asp102, His216, and Glu220.

The protein belongs to the GTP cyclohydrolase I type 2/NIF3 family. As to quaternary structure, homohexamer; trimer of dimers, that forms a hollow cage-like architecture.

Functionally, DNA-binding protein exhibiting the ability to bind to both single-stranded and double-stranded DNA. This chain is GTP cyclohydrolase 1 type 2 homolog, found in Methanocaldococcus jannaschii (strain ATCC 43067 / DSM 2661 / JAL-1 / JCM 10045 / NBRC 100440) (Methanococcus jannaschii).